We begin with the raw amino-acid sequence, 250 residues long: Diaminopimelate epimerase (250 aa).

Residues N11 and N60 each contribute to the substrate site. C69 functions as the Proton donor in the catalytic mechanism. Substrate contacts are provided by residues G70 to N71, N164, and E182 to R183. Catalysis depends on C192, which acts as the Proton acceptor. Residue G193–T194 participates in substrate binding.

The protein belongs to the diaminopimelate epimerase family. In terms of assembly, homodimer.

It is found in the cytoplasm. It catalyses the reaction (2S,6S)-2,6-diaminopimelate = meso-2,6-diaminopimelate. The protein operates within amino-acid biosynthesis; L-lysine biosynthesis via DAP pathway; DL-2,6-diaminopimelate from LL-2,6-diaminopimelate: step 1/1. Catalyzes the stereoinversion of LL-2,6-diaminopimelate (L,L-DAP) to meso-diaminopimelate (meso-DAP), a precursor of L-lysine and an essential component of the bacterial peptidoglycan. The chain is Diaminopimelate epimerase from Nitratiruptor sp. (strain SB155-2).